The primary structure comprises 166 residues: Lipoprotein signal peptidase (166 aa).

3 helical membrane-spanning segments follow: residues 12–32, 70–90, and 102–122; these read WLWL…LILQ, WFFA…MYRS, and ALII…GFVV. Active-site residues include Asp-123 and Asp-141. The chain crosses the membrane as a helical span at residues 137-157; sequence FNLADTAICIGAALIVLEGFL.

Belongs to the peptidase A8 family.

Its subcellular location is the cell inner membrane. It catalyses the reaction Release of signal peptides from bacterial membrane prolipoproteins. Hydrolyzes -Xaa-Yaa-Zaa-|-(S,diacylglyceryl)Cys-, in which Xaa is hydrophobic (preferably Leu), and Yaa (Ala or Ser) and Zaa (Gly or Ala) have small, neutral side chains.. It participates in protein modification; lipoprotein biosynthesis (signal peptide cleavage). Its function is as follows. This protein specifically catalyzes the removal of signal peptides from prolipoproteins. The protein is Lipoprotein signal peptidase of Salmonella typhi.